A 311-amino-acid chain; its full sequence is Olfactory receptor 2A5 (311 aa).

Topologically, residues 1–24 are extracellular; the sequence is MTKNQTWVTEFILLGFPLSLRIQM. Asn4 carries an N-linked (GlcNAc...) asparagine glycan. Residues 25–48 form a helical membrane-spanning segment; the sequence is LLSGLFSLLYVFTLLGNGAILGLI. Over 49–56 the chain is Cytoplasmic; sequence WLDSRLHT. Residues 57 to 78 form a helical membrane-spanning segment; the sequence is PMYFFLSHLAIIDISYASNNVP. Over 79–100 the chain is Extracellular; that stretch reads KMLTNLGLNKRKTISFVPCTMQ. A disulfide bridge connects residues Cys97 and Cys189. Residues 101-120 traverse the membrane as a helical segment; sequence TFLYMAFAHTECLILVMMSY. Over 121-139 the chain is Cytoplasmic; it reads DRYMAICHPLQYSVIMRWG. The chain crosses the membrane as a helical span at residues 140–158; it reads VCTVLAVTSWACGSLLALV. The Extracellular portion of the chain corresponds to 159-196; sequence HVVLILRLPFCGPHEINHFFCEILSVLKLACADTWLNQ. A helical transmembrane segment spans residues 197–219; sequence VVIFAASVFILVGPLCLVLVSYS. The Cytoplasmic portion of the chain corresponds to 220-236; that stretch reads RILAAILRIQSGEGRRK. The chain crosses the membrane as a helical span at residues 237 to 259; that stretch reads AFSTCSSHLCMVGLFFGSAIVMY. The Extracellular segment spans residues 260–272; sequence MAPKSRHPEEQQK. The helical transmembrane segment at 273-292 threads the bilayer; it reads VLSLFYSLFNPMLNPLIYSL. At 293 to 311 the chain is on the cytoplasmic side; sequence RNAEVKGALKRVLWKQRSK.

It belongs to the G-protein coupled receptor 1 family.

Its subcellular location is the cell membrane. Odorant receptor. This is Olfactory receptor 2A5 (OR2A5) from Homo sapiens (Human).